A 232-amino-acid polypeptide reads, in one-letter code: Cytidylate kinase (232 aa).

Gly-15–Thr-23 provides a ligand contact to ATP. Positions Lys-164 to Ala-192 are disordered. Basic and acidic residues predominate over residues Glu-178 to Arg-189.

Belongs to the cytidylate kinase family. Type 1 subfamily.

It localises to the cytoplasm. The enzyme catalyses CMP + ATP = CDP + ADP. It carries out the reaction dCMP + ATP = dCDP + ADP. This is Cytidylate kinase from Solibacter usitatus (strain Ellin6076).